Reading from the N-terminus, the 426-residue chain is Histidine--tRNA ligase (426 aa).

The protein belongs to the class-II aminoacyl-tRNA synthetase family. In terms of assembly, homodimer.

The protein resides in the cytoplasm. The catalysed reaction is tRNA(His) + L-histidine + ATP = L-histidyl-tRNA(His) + AMP + diphosphate + H(+). This chain is Histidine--tRNA ligase, found in Legionella pneumophila (strain Lens).